A 312-amino-acid chain; its full sequence is Cell division control protein 2 homolog D (312 aa).

In terms of domain architecture, Protein kinase spans 14–304 (FVKLEKVGEG…AKKAMEHPYF (291 aa)). ATP is bound by residues 20 to 28 (VGEGTYGKV) and lysine 43. Residue threonine 24 is modified to Phosphothreonine. At tyrosine 25 the chain carries Phosphotyrosine. The active-site Proton acceptor is aspartate 145. Phosphothreonine; by CAK is present on threonine 179.

It belongs to the protein kinase superfamily. CMGC Ser/Thr protein kinase family. CDC2/CDKX subfamily.

It catalyses the reaction L-seryl-[protein] + ATP = O-phospho-L-seryl-[protein] + ADP + H(+). The enzyme catalyses L-threonyl-[protein] + ATP = O-phospho-L-threonyl-[protein] + ADP + H(+). It carries out the reaction [DNA-directed RNA polymerase] + ATP = phospho-[DNA-directed RNA polymerase] + ADP + H(+). In terms of biological role, plays a key role in the control of the eukaryotic cell cycle. The polypeptide is Cell division control protein 2 homolog D (CDC2D) (Antirrhinum majus (Garden snapdragon)).